Reading from the N-terminus, the 392-residue chain is Hercynylcysteine sulfoxide lyase (392 aa).

The residue at position 219 (Lys-219) is an N6-(pyridoxal phosphate)lysine.

Belongs to the class-V pyridoxal-phosphate-dependent aminotransferase family. EgtE subfamily. Requires pyridoxal 5'-phosphate as cofactor.

It localises to the cytoplasm. The protein resides in the nucleus. The catalysed reaction is S-(hercyn-2-yl)-L-cysteine S-oxide + AH2 + H(+) = ergothioneine + pyruvate + A + NH4(+). It functions in the pathway amino-acid biosynthesis; ergothioneine biosynthesis. Functionally, catalyzes the conversion of hercynylcysteine sulfoxide to ergothioneine by cleaving the cysteine residue at the sulfur atom, the last step in the biosynthesis pathway of ergothioneine. The polypeptide is Hercynylcysteine sulfoxide lyase (Schizosaccharomyces pombe (strain 972 / ATCC 24843) (Fission yeast)).